Consider the following 590-residue polypeptide: Aspartate--tRNA(Asp/Asn) ligase (590 aa).

Glu175 is a binding site for L-aspartate. The tract at residues 199–202 (QQYK) is aspartate. L-aspartate contacts are provided by Arg221 and His450. ATP is bound at residue 221 to 223 (RDE). Position 484 (Glu484) interacts with ATP. Arg491 provides a ligand contact to L-aspartate. 536–539 (GVDR) contributes to the ATP binding site.

The protein belongs to the class-II aminoacyl-tRNA synthetase family. Type 1 subfamily. Homodimer.

The protein resides in the cytoplasm. The catalysed reaction is tRNA(Asx) + L-aspartate + ATP = L-aspartyl-tRNA(Asx) + AMP + diphosphate. Aspartyl-tRNA synthetase with relaxed tRNA specificity since it is able to aspartylate not only its cognate tRNA(Asp) but also tRNA(Asn). Reaction proceeds in two steps: L-aspartate is first activated by ATP to form Asp-AMP and then transferred to the acceptor end of tRNA(Asp/Asn). The sequence is that of Aspartate--tRNA(Asp/Asn) ligase from Rhodopseudomonas palustris (strain BisA53).